The chain runs to 804 residues: E3 UFM1-protein ligase 1 homolog (804 aa).

The residue at position 1 (methionine 1) is an N-acetylmethionine. The segment at 397 to 483 (IHPSSKSSES…VKAQESNNII (87 aa)) is disordered. The segment covering 400–409 (SSKSSESTES) has biased composition (low complexity). Over residues 463–475 (LDSKAGGKKESVK) the composition is skewed to basic and acidic residues.

It belongs to the UFL1 family.

Functionally, E3 UFM1-protein ligase that mediates ufmylation of target proteins. The polypeptide is E3 UFM1-protein ligase 1 homolog (Arabidopsis thaliana (Mouse-ear cress)).